The chain runs to 288 residues: G1/S-specific cyclin-D2 (288 aa).

A Cyclin N-terminal domain is found at 26 to 151 (VLQNLLTIEE…VVLGKLKWNL (126 aa)). The interval 264–288 (DQDGSKSEDELDQASTPTDVRDIDL) is disordered. S270 is subject to Phosphoserine. T279 is modified (phosphothreonine).

This sequence belongs to the cyclin family. Cyclin D subfamily. Interacts with either CDK4 or CDK6 protein kinase to form a serine/threonine kinase holoenzyme complex. The cyclin subunit imparts substrate specificity to the complex. Post-translationally, phosphorylation at Thr-279 by MAP kinases is required for ubiquitination and degradation by the DCX(AMBRA1) complex. In terms of processing, ubiquitinated by the DCX(AMBRA1) complex during the transition from G1 to S cell phase, leading to its degradation: ubiquitination is dependent on Thr-279 phosphorylation. The DCX(AMBRA1) complex represents the major regulator of CCND2 stability during the G1/S transition. Polyubiquitinated by the SCF(FBXL2) complex, leading to proteasomal degradation.

It is found in the nucleus. It localises to the cytoplasm. The protein localises to the nucleus membrane. In terms of biological role, regulatory component of the cyclin D2-CDK4 (DC) complex that phosphorylates and inhibits members of the retinoblastoma (RB) protein family including RB1 and regulates the cell-cycle during G(1)/S transition. Phosphorylation of RB1 allows dissociation of the transcription factor E2F from the RB/E2F complex and the subsequent transcription of E2F target genes which are responsible for the progression through the G(1) phase. Hypophosphorylates RB1 in early G(1) phase. Cyclin D-CDK4 complexes are major integrators of various mitogenenic and antimitogenic signals. In Sus scrofa (Pig), this protein is G1/S-specific cyclin-D2 (CCND2).